Consider the following 237-residue polypeptide: Ribosomal RNA small subunit methyltransferase G (237 aa).

S-adenosyl-L-methionine-binding positions include Gly78, Phe83, 129–130, and Arg148; that span reads AE.

Belongs to the methyltransferase superfamily. RNA methyltransferase RsmG family.

It localises to the cytoplasm. Functionally, specifically methylates the N7 position of a guanine in 16S rRNA. In Streptococcus thermophilus (strain CNRZ 1066), this protein is Ribosomal RNA small subunit methyltransferase G.